Consider the following 356-residue polypeptide: Uroporphyrinogen decarboxylase (356 aa).

Substrate-binding positions include 23-27 (RQAGR), Asp-72, Tyr-148, Ser-203, and His-321.

This sequence belongs to the uroporphyrinogen decarboxylase family. Homodimer.

It is found in the cytoplasm. The enzyme catalyses uroporphyrinogen III + 4 H(+) = coproporphyrinogen III + 4 CO2. The protein operates within porphyrin-containing compound metabolism; protoporphyrin-IX biosynthesis; coproporphyrinogen-III from 5-aminolevulinate: step 4/4. In terms of biological role, catalyzes the decarboxylation of four acetate groups of uroporphyrinogen-III to yield coproporphyrinogen-III. This is Uroporphyrinogen decarboxylase from Chloroflexus aggregans (strain MD-66 / DSM 9485).